The primary structure comprises 398 residues: 8-amino-7-oxononanoate synthase (398 aa).

Arg26 is a substrate binding site. Gly113 to Phe114 provides a ligand contact to pyridoxal 5'-phosphate. His138 contributes to the substrate binding site. Ser181, His209, and Thr238 together coordinate pyridoxal 5'-phosphate. Lys241 bears the N6-(pyridoxal phosphate)lysine mark. Thr355 is a substrate binding site.

It belongs to the class-II pyridoxal-phosphate-dependent aminotransferase family. BioF subfamily. In terms of assembly, homodimer. Requires pyridoxal 5'-phosphate as cofactor.

It carries out the reaction 6-carboxyhexanoyl-[ACP] + L-alanine + H(+) = (8S)-8-amino-7-oxononanoate + holo-[ACP] + CO2. It participates in cofactor biosynthesis; biotin biosynthesis. Functionally, catalyzes the decarboxylative condensation of pimeloyl-[acyl-carrier protein] and L-alanine to produce 8-amino-7-oxononanoate (AON), [acyl-carrier protein], and carbon dioxide. This chain is 8-amino-7-oxononanoate synthase, found in Aeromonas hydrophila subsp. hydrophila (strain ATCC 7966 / DSM 30187 / BCRC 13018 / CCUG 14551 / JCM 1027 / KCTC 2358 / NCIMB 9240 / NCTC 8049).